The primary structure comprises 179 residues: Large ribosomal subunit protein uL5 (179 aa).

It belongs to the universal ribosomal protein uL5 family. As to quaternary structure, part of the 50S ribosomal subunit; part of the 5S rRNA/L5/L18/L25 subcomplex. Contacts the 5S rRNA and the P site tRNA. Forms a bridge to the 30S subunit in the 70S ribosome.

Functionally, this is one of the proteins that bind and probably mediate the attachment of the 5S RNA into the large ribosomal subunit, where it forms part of the central protuberance. In the 70S ribosome it contacts protein S13 of the 30S subunit (bridge B1b), connecting the 2 subunits; this bridge is implicated in subunit movement. Contacts the P site tRNA; the 5S rRNA and some of its associated proteins might help stabilize positioning of ribosome-bound tRNAs. This Pseudomonas aeruginosa (strain LESB58) protein is Large ribosomal subunit protein uL5.